We begin with the raw amino-acid sequence, 424 residues long: MTTILDELRWRGLLYESSDGLDDLLERERVTLYIGFDPSADSLHIGHLLPLLTLARFQRWGHTPIALAGGGTGLIGDPSGKTQERPLLSKEQVAANVEAIKRQLAQFLDFNAGDHSAMLLNNAEWLTRLSLMDFLRDVGKHLTVNYMLAKDSVRSRMMSETGISFTEFSYMLLQAYDFAYLFEHYGCKLQAGGSDQWGNITAGIELIRRTSGQKAYGLVYPLVTKADGTKFGKTESGAVWLDPKRTSPYRFYQFWYNVDDADVGKYLRYFTWLSAAEIEELEQITARQPERRTAQQRLAREVTRMVHGEAALARAEEASQALFGGSLASLSADDVADIFEDVPSITLPRQDLEGDGMSLIDALVRCGIATSKSDARRAIEGGGIYINNVQSADVGRRLTLHDSIDGQCIVLRKGRRHYHLIRLV.

Residue Tyr-33 participates in L-tyrosine binding. Residues Pro-38–His-47 carry the 'HIGH' region motif. Residues Tyr-170 and Gln-174 each contribute to the L-tyrosine site. The 'KMSKS' region signature appears at Lys-230–Thr-234. Residue Lys-233 coordinates ATP. Positions Met-357 to Val-424 constitute an S4 RNA-binding domain.

The protein belongs to the class-I aminoacyl-tRNA synthetase family. TyrS type 1 subfamily. In terms of assembly, homodimer.

The protein localises to the cytoplasm. The enzyme catalyses tRNA(Tyr) + L-tyrosine + ATP = L-tyrosyl-tRNA(Tyr) + AMP + diphosphate + H(+). Functionally, catalyzes the attachment of tyrosine to tRNA(Tyr) in a two-step reaction: tyrosine is first activated by ATP to form Tyr-AMP and then transferred to the acceptor end of tRNA(Tyr). The polypeptide is Tyrosine--tRNA ligase (Roseiflexus castenholzii (strain DSM 13941 / HLO8)).